The primary structure comprises 46 residues: SNKKDYRKEIVDKHNALRRSVKPTARNMLSMEVNSKAAQNAQRRXD.

This sequence belongs to the CRISP family. Post-translationally, contains 8 disulfide bonds. Expressed by the venom gland.

The protein resides in the secreted. Its function is as follows. Blocks contraction of smooth muscle elicited by high potassium-induced depolarization, but does not block caffeine-stimulated contraction. May target voltage-gated calcium channels on smooth muscle. This is Cysteine-rich venom protein asurin-1 from Austrelaps superbus (Lowland copperhead snake).